The chain runs to 185 residues: dCTP deaminase (185 aa).

Residues 107-112 (KSTYAR), 131-133 (TLE), glutamine 152, tyrosine 166, and glutamine 176 each bind dCTP. The active-site Proton donor/acceptor is glutamate 133.

The protein belongs to the dCTP deaminase family. As to quaternary structure, homotrimer.

The enzyme catalyses dCTP + H2O + H(+) = dUTP + NH4(+). The protein operates within pyrimidine metabolism; dUMP biosynthesis; dUMP from dCTP (dUTP route): step 1/2. Functionally, catalyzes the deamination of dCTP to dUTP. The polypeptide is dCTP deaminase (Neorickettsia sennetsu (strain ATCC VR-367 / Miyayama) (Ehrlichia sennetsu)).